The following is a 340-amino-acid chain: Coproporphyrin III ferrochelatase (340 aa).

2 residues coordinate Fe-coproporphyrin III: serine 52 and tyrosine 116. Fe(2+)-binding residues include histidine 172 and glutamate 255.

It belongs to the ferrochelatase family.

It is found in the cytoplasm. The catalysed reaction is Fe-coproporphyrin III + 2 H(+) = coproporphyrin III + Fe(2+). The protein operates within porphyrin-containing compound metabolism; protoheme biosynthesis. Its function is as follows. Involved in coproporphyrin-dependent heme b biosynthesis. Catalyzes the insertion of ferrous iron into coproporphyrin III to form Fe-coproporphyrin III. This Mycobacterium marinum (strain ATCC BAA-535 / M) protein is Coproporphyrin III ferrochelatase.